A 1217-amino-acid chain; its full sequence is Nuclear matrix constituent protein 1 (1217 aa).

Polar residues predominate over residues 1–14 (MLTPQRSAWSLKSK). Positions 1 to 45 (MLTPQRSAWSLKSKVSSEKPRSKGKGITKNLDSAATPFPPLGLLN) are disordered. Residues 159–746 (VTDLEKALRE…KNQRAEFIKE (588 aa)) adopt a coiled-coil conformation. Low complexity predominate over residues 892-904 (SEDAAANDNNPAA). 4 disordered regions span residues 892–969 (SEDA…VVDD), 981–1057 (EEAK…VQAP), 1087–1117 (VQTK…HKVT), and 1152–1217 (ISEM…FFTT). Positions 947-960 (STRRGRGGKTVRRT) are enriched in basic residues. Polar residues-rich tracts occupy residues 986–1007 (SSQQ…TSNT) and 1087–1103 (VQTK…NQIS). The segment covering 1173 to 1186 (EEPATPSSGSSTSG) has biased composition (low complexity). Residues 1189–1200 (GNDDDMDDDDEE) show a composition bias toward acidic residues.

It belongs to the CRWN family.

The protein resides in the nucleus matrix. It is found in the nucleus lamina. Its function is as follows. Architectural component of nuclear structure that plays different roles in controlling nuclear size and morphology. Involved in the organization of multimeric complexes in the peripheral nucleoskeleton. This is Nuclear matrix constituent protein 1 from Allium cepa (Onion).